We begin with the raw amino-acid sequence, 235 residues long: Aspartate/glutamate leucyltransferase (235 aa).

This sequence belongs to the R-transferase family. Bpt subfamily.

It is found in the cytoplasm. It carries out the reaction N-terminal L-glutamyl-[protein] + L-leucyl-tRNA(Leu) = N-terminal L-leucyl-L-glutamyl-[protein] + tRNA(Leu) + H(+). The enzyme catalyses N-terminal L-aspartyl-[protein] + L-leucyl-tRNA(Leu) = N-terminal L-leucyl-L-aspartyl-[protein] + tRNA(Leu) + H(+). Functionally, functions in the N-end rule pathway of protein degradation where it conjugates Leu from its aminoacyl-tRNA to the N-termini of proteins containing an N-terminal aspartate or glutamate. This is Aspartate/glutamate leucyltransferase from Pseudomonas syringae pv. syringae (strain B728a).